The sequence spans 139 residues: Asp-hemolysin (139 aa).

Positions 1–5 (MASVQ) are excised as a propeptide. Positions 47-79 (TSEDVQQKTAPPGGSVNVNSCGRSDASSGTTGG) are disordered. Positions 62 to 75 (VNVNSCGRSDASSG) are enriched in polar residues.

This sequence belongs to the aegerolysin family.

This is Asp-hemolysin from Aspergillus fumigatus (strain ATCC MYA-4609 / CBS 101355 / FGSC A1100 / Af293) (Neosartorya fumigata).